A 134-amino-acid polypeptide reads, in one-letter code: Fluoride-specific ion channel FluC 2 (134 aa).

The next 4 membrane-spanning stretches (helical) occupy residues 1–21 (MNYFAVALGGFFGAIAREITG), 28–48 (IFPVGTLAINLSGSFLLLFFM), 68–88 (GFLGAYTTFSTMTKEIYLLLF), and 92–112 (LLIGFAYLFLSLSGGFLSGIL). Na(+) contacts are provided by Gly-71 and Thr-74.

It belongs to the fluoride channel Fluc/FEX (TC 1.A.43) family.

Its subcellular location is the cell membrane. The enzyme catalyses fluoride(in) = fluoride(out). With respect to regulation, na(+) is not transported, but it plays an essential structural role and its presence is essential for fluoride channel function. Its function is as follows. Fluoride-specific ion channel. Important for reducing fluoride concentration in the cell, thus reducing its toxicity. The sequence is that of Fluoride-specific ion channel FluC 2 from Carboxydothermus hydrogenoformans (strain ATCC BAA-161 / DSM 6008 / Z-2901).